A 317-amino-acid chain; its full sequence is Putative cuticle collagen 80 (317 aa).

Residues 80–262 are disordered; that stretch reads CNCGPQASNC…GAPGNDGAPG (183 aa). 3 triple-helical region regions span residues 92 to 124, 137 to 199, and 202 to 264; these read GPPG…AGPA, GAPG…SGQR, and GLPG…PGSD. 3 stretches are compositionally biased toward low complexity: residues 108–124, 135–145, and 175–206; these read QPGP…AGPA, PQGAPGPAGAP, and AGDA…LPGP. 2 stretches are compositionally biased toward pro residues: residues 207-219 and 230-240; these read SGRP…PGAP and PAGPPGPPGPN. The span at 242-262 shows a compositional bias: low complexity; sequence QPGHPGQDGQPGAPGNDGAPG.

It belongs to the cuticular collagen family. As to quaternary structure, collagen polypeptide chains are complexed within the cuticle by disulfide bonds and other types of covalent cross-links.

Functionally, nematode cuticles are composed largely of collagen-like proteins. The cuticle functions both as an exoskeleton and as a barrier to protect the worm from its environment. This is Putative cuticle collagen 80 (col-80) from Caenorhabditis elegans.